Reading from the N-terminus, the 215-residue chain is Cytochrome c biogenesis ATP-binding export protein CcmA (215 aa).

Residues 3 to 215 (LEAENLAGER…MAAFSVEDIA (213 aa)) enclose the ABC transporter domain. Residue 35 to 42 (GPNGSGKS) coordinates ATP.

This sequence belongs to the ABC transporter superfamily. CcmA exporter (TC 3.A.1.107) family. As to quaternary structure, the complex is composed of two ATP-binding proteins (CcmA) and two transmembrane proteins (CcmB).

Its subcellular location is the cell inner membrane. The catalysed reaction is heme b(in) + ATP + H2O = heme b(out) + ADP + phosphate + H(+). Functionally, part of the ABC transporter complex CcmAB involved in the biogenesis of c-type cytochromes; once thought to export heme, this seems not to be the case, but its exact role is uncertain. Responsible for energy coupling to the transport system. The protein is Cytochrome c biogenesis ATP-binding export protein CcmA of Brucella melitensis biotype 1 (strain ATCC 23456 / CCUG 17765 / NCTC 10094 / 16M).